Reading from the N-terminus, the 174-residue chain is Protein SHI RELATED SEQUENCE 3 (174 aa).

Zn(2+) contacts are provided by cysteine 9, cysteine 12, cysteine 20, cysteine 25, cysteine 29, and cysteine 36. The zn(2)-C6 fungal-type; degenerate DNA-binding region spans 9-36; the sequence is CEDCGNQAKKDCVYMRCRTCCKSKAFHC. The Required for homo- and heterodimerization signature appears at 110–113; the sequence is IGGH.

It belongs to the SHI protein family.

It is found in the nucleus. Its function is as follows. Transcription activator that binds DNA on 5'-ACTCTAC-3' and promotes auxin homeostasis-regulating gene expression (e.g. YUC genes), as well as genes affecting stamen development, cell expansion and timing of flowering. Synergistically with other SHI-related proteins, regulates gynoecium, stamen and leaf development in a dose-dependent manner, controlling apical-basal patterning. Promotes style and stigma formation, and influences vascular development during gynoecium development. May also have a role in the formation and/or maintenance of the shoot apical meristem (SAM). This is Protein SHI RELATED SEQUENCE 3 (SRS3) from Arabidopsis thaliana (Mouse-ear cress).